Here is a 365-residue protein sequence, read N- to C-terminus: Leu/Ile/Val/Thr-binding protein (365 aa).

The N-terminal stretch at 1–21 (MKGKTLLAGCIALSLSHMAFA) is a signal peptide. Cys-74 and Cys-99 form a disulfide bridge.

Belongs to the leucine-binding protein family.

It localises to the periplasm. Functionally, this protein is a component of the leucine, isoleucine, valine, threonine transport system, which is one of the two periplasmic binding protein-dependent transport systems of the high-affinity transport of the branched-chain amino acids. The protein is Leu/Ile/Val/Thr-binding protein (livJ) of Salmonella typhimurium (strain LT2 / SGSC1412 / ATCC 700720).